A 79-amino-acid chain; its full sequence is Acyl carrier protein (79 aa).

One can recognise a Carrier domain in the interval 2-77 (ESIEQRVKKI…QAIDYINSHG (76 aa)). Residue Ser37 is modified to O-(pantetheine 4'-phosphoryl)serine.

The protein belongs to the acyl carrier protein (ACP) family. Post-translationally, 4'-phosphopantetheine is transferred from CoA to a specific serine of apo-ACP by AcpS. This modification is essential for activity because fatty acids are bound in thioester linkage to the sulfhydryl of the prosthetic group.

It is found in the cytoplasm. It participates in lipid metabolism; fatty acid biosynthesis. Functionally, carrier of the growing fatty acid chain in fatty acid biosynthesis. This Bordetella avium (strain 197N) protein is Acyl carrier protein.